A 44-amino-acid chain; its full sequence is uncharacterized protein (44 aa).

The disordered stretch occupies residues 22 to 44 (LNSAPAFKSSQNTSTQAKPTFSN).

This is an uncharacterized protein from Dictyostelium discoideum (Social amoeba).